The sequence spans 556 residues: MQFKKHKNSVKFKRKLFWTIGVLGAGALTTFSAVMITNLVNQSGYALVASGRSGNLGFKLFSTQSPSAEVKLKSLSLNDGSYQSEIDLSGGANFREKFRNFANELSEAITNSPKGLDRPVPKTEISGLIKTGDNFITPSFKAGYYDHVASDGSLLSYYQSTEYFNNRVLMPILQTTNGTLMANNRGYDDVFRQVPSFSGWSNTKATTVSTSNNLTYDKWTYFAAKGSPLYDSYPNHFFEDVKTLAIDAKDISALKTTIDSEKPTYLIIRGLSGNGSQLNELQLPESVKKVSLYGDYTGVNVAKQIFANVVELEFYSTSKANSFGFNPLVLGSKTNVIYDLFASKPFTHIDLTQVTLQNSDNSAIDANKLKQAVGDIYNYRRFERQFQGYFAGGYIDKYLVKNVNTNKDSDDDLVYRSLKELNLHLEEAYREGDNTYYRVNENYYPGASIYENERASRDSEFQNEILKRAEQNGVTFDENIKRITASGKYSVQFQKLENDTDSSLERMTKAVEGLVTVIGEEKFETVDITGVSSDTNEVKSLAKELKTNALGVKLKL.

A helical transmembrane segment spans residues 16-36 (LFWTIGVLGAGALTTFSAVMI).

It localises to the membrane. This is an uncharacterized protein from Mycoplasma genitalium (strain ATCC 33530 / DSM 19775 / NCTC 10195 / G37) (Mycoplasmoides genitalium).